A 391-amino-acid polypeptide reads, in one-letter code: Probable sugar efflux transporter (391 aa).

12 helical membrane-spanning segments follow: residues 16-36 (VFVF…PVAL), 51-71 (VGLM…PLML), 82-102 (LLFL…AWNF), 103-123 (WVLL…WSIT), 138-158 (QALG…LPLG), 170-190 (TFGV…KLLP), 210-230 (PLLV…FTTY), 247-267 (ITTL…FLFG), 277-297 (FIAF…VFKN), 300-320 (WVIF…TIAL), 338-358 (IFSG…SIVI), and 361-381 (LGLE…LFWL).

It belongs to the major facilitator superfamily. SotB (TC 2.A.1.2) family.

The protein localises to the cell inner membrane. Involved in the efflux of sugars. The physiological role may be the reduction of the intracellular concentration of toxic sugars or sugar metabolites. In Helicobacter pylori (strain P12), this protein is Probable sugar efflux transporter.